The primary structure comprises 525 residues: Ubiquitin carboxyl-terminal hydrolase 22 (525 aa).

A UBP-type zinc finger spans residues 21 to 138; sequence PGCSHLGSFK…KEEQRKAWKM (118 aa). Residues C23, H25, C63, C66, C76, C79, C84, H89, H93, H99, C112, and C115 each contribute to the Zn(2+) site. K129 is modified (N6-acetyllysine). Position 147 is a phosphothreonine; by CDK1 (T147). The USP domain occupies 176 to 520; the sequence is RGLINLGNTC…EGYLLFYHKQ (345 aa). The Nucleophile role is filled by C185. The residue at position 237 (S237) is a Phosphoserine; by CDK1. The active-site Proton acceptor is H479.

It belongs to the peptidase C19 family. UBP8 subfamily. Component of some SAGA transcription coactivator-HAT complexes, at least composed of ATXN7, ATXN7L3, ENY2, GCN5L2, SUPT3H, TAF10, TRRAP and USP22. Within the SAGA complex, ATXN7L3, ENY2 and USP22 form a subcomplex required for histone deubiquitination. Interacts directly with ATXN7L3; leading to its recruitment to the SAGA complex. Interacts with ATXN7L3 and weakly with ATXN7L3B. Interacts with MED1. Phosphorylated in G2/M phase, but not in G1 phase by CDK1. Post-translationally, ubiquitinated and subsequently degraded in a CDC20-dependent manner. In terms of tissue distribution, moderately expressed in various tissues including heart and skeletal muscle, and weakly expressed in lung and liver.

The protein localises to the nucleus. The protein resides in the cytoplasm. It catalyses the reaction Thiol-dependent hydrolysis of ester, thioester, amide, peptide and isopeptide bonds formed by the C-terminal Gly of ubiquitin (a 76-residue protein attached to proteins as an intracellular targeting signal).. Its function is as follows. Deubiquitinase that plays a role in several cellular processes including transcriptional regulation, cell cycle progression or innate immunity. As part of the transcription regulatory histone acetylation (HAT) complex SAGA, catalyzes the deubiquitination of both histones H2A and H2B, thereby acting as a transcriptional coactivator. Recruited to specific gene promoters by activators such as MYC, where it is required for transcription. Facilitates cell-cycle progression by stabilizing CCNB1 and antagonizing its proteasome-mediated degradation in a cell cycle-specific manner. Modulates cell cycle progression and apoptosis also by antagonizing TP53 transcriptional activation through deacetylase SIRT1 stabilization. Plays multiple roles in immunity and inflammation. Participates in antiviral response by deubiquitinating the importin KPNA2, leading to IRF3 nuclear translocation and subsequent type I interferon production. Acts as a central regulator of type III IFN signaling by negatively regulating STING1 activation and ubiquitination. Inhibits NLRP3 inflammasome activation by promoting NLRP3 degradation through ATG5-dependent autophagy. Deubiquitinates CD274 to induce its stabilization and thereby participates in maintenance of immune tolerance to self. Controls necroptotic cell death by regulating RIPK3 phosphorylation and ubiquitination. During bacterial infection, promotes pro-inflammatory response by targeting TRAF6 and removing its 'Lys-48'-linked polyubiquitination. The polypeptide is Ubiquitin carboxyl-terminal hydrolase 22 (USP22) (Homo sapiens (Human)).